Here is a 786-residue protein sequence, read N- to C-terminus: Endonuclease MutS2 (786 aa).

Position 335–342 (335–342 (GPNTGGKT)) interacts with ATP. Positions 711 to 786 (LDLRGERFEN…GLGVTVVELK (76 aa)) constitute a Smr domain.

It belongs to the DNA mismatch repair MutS family. MutS2 subfamily. As to quaternary structure, homodimer. Binds to stalled ribosomes, contacting rRNA.

Its function is as follows. Endonuclease that is involved in the suppression of homologous recombination and thus may have a key role in the control of bacterial genetic diversity. Functionally, acts as a ribosome collision sensor, splitting the ribosome into its 2 subunits. Detects stalled/collided 70S ribosomes which it binds and splits by an ATP-hydrolysis driven conformational change. Acts upstream of the ribosome quality control system (RQC), a ribosome-associated complex that mediates the extraction of incompletely synthesized nascent chains from stalled ribosomes and their subsequent degradation. Probably generates substrates for RQC. This Bacillus cereus (strain AH820) protein is Endonuclease MutS2.